The chain runs to 344 residues: Type II methyltransferase M.FnuDI (344 aa).

An SAM-dependent MTase C5-type domain is found at 1 to 330; it reads MKLLSLFSGA…KRIKETLTDK (330 aa). Residue C71 is part of the active site.

It belongs to the class I-like SAM-binding methyltransferase superfamily. C5-methyltransferase family.

It catalyses the reaction a 2'-deoxycytidine in DNA + S-adenosyl-L-methionine = a 5-methyl-2'-deoxycytidine in DNA + S-adenosyl-L-homocysteine + H(+). Functionally, a methylase, recognizes the double-stranded sequence 5'-GGCC-3', methylates C-? on both strands, and protects the DNA from cleavage by the FnuDI endonuclease. The protein is Type II methyltransferase M.FnuDI (fnuDIM) of Fusobacterium nucleatum.